Here is a 159-residue protein sequence, read N- to C-terminus: Putative viral CXC chemokine 2 (159 aa).

2 disulfides stabilise this stretch: cysteine 50-cysteine 77 and cysteine 52-cysteine 93.

Belongs to the intercrine alpha (chemokine CxC) family.

The sequence is that of Putative viral CXC chemokine 2 (UL147) from Human cytomegalovirus (strain Towne) (HHV-5).